The following is a 573-amino-acid chain: MTQGPGGRAAPEPEAPTTFCALLPRMPQWKFAAPGSFLGRGPAAARVAGAAEAQPEPGVPALAAVLGACEPRCAAPCPLPALGRCRGSGSRGARGTPDVADEWVRKGGFIHKPAHGWLHPDARVLGPGVSYIVRYMGCIEVLRSMRSLDFNTRTQVTREAINRLHEAVPGVRGSWKKKAPNKALASILGKSNLRFAGMSISVNISVDGLNLSVPATRQIIANHHMQSISFASGGDTDMTDYVAYVAKDPINQRACHILECCEGLAQSVISTVGQAFELRFKQYLHSPPKAVVPPERLTGLEESAWGDGEVTADHDYYNSIPGKEPPLGGLVDSRLAVTQPCALTTLGGLGQGLSPAWRDVRGLPWDMGPSGAVPPGDGYVQADARGPHDYEEHLYVNTQGLDALELEDTSETPLQPEDSPKKDLFDMRPFEDALKLHECSVAAGITAASLPLEDQWPSPPTRRAPIAPTEEQLRQEPWYHGRMSRRAAEKLLRADGDFLVRDSITNPGQYVLTGMHAGQPKHLLLVDPEGVVRTKDVLFESISHLIDYHLKNGLPIVAAESELHLRGVVSREP.

The region spanning Leu125–Asp307 is the PID domain. One can recognise an SH2 domain in the interval Trp478–Val569.

As to quaternary structure, interacts with the Trk receptors in a phosphotyrosine-dependent manner and MEGF12. Once activated, binds to GRB2. In terms of processing, phosphorylated on tyrosine by the Trk receptors.

Functionally, signaling adapter that couples activated growth factor receptors to signaling pathway in neurons. Involved in the signal transduction pathways of neurotrophin-activated Trk receptors in cortical neurons. This chain is SHC-transforming protein 2 (Shc2), found in Rattus norvegicus (Rat).